A 449-amino-acid chain; its full sequence is Putative cytochrome P450 135A1 (449 aa).

Cys-383 contributes to the heme binding site.

This sequence belongs to the cytochrome P450 family. The cofactor is heme.

This is Putative cytochrome P450 135A1 (cyp135A1) from Mycobacterium tuberculosis (strain CDC 1551 / Oshkosh).